Here is a 370-residue protein sequence, read N- to C-terminus: Anhydro-N-acetylmuramic acid kinase (370 aa).

13 to 20 (GTSMDGVD) contributes to the ATP binding site.

This sequence belongs to the anhydro-N-acetylmuramic acid kinase family.

It carries out the reaction 1,6-anhydro-N-acetyl-beta-muramate + ATP + H2O = N-acetyl-D-muramate 6-phosphate + ADP + H(+). It participates in amino-sugar metabolism; 1,6-anhydro-N-acetylmuramate degradation. It functions in the pathway cell wall biogenesis; peptidoglycan recycling. In terms of biological role, catalyzes the specific phosphorylation of 1,6-anhydro-N-acetylmuramic acid (anhMurNAc) with the simultaneous cleavage of the 1,6-anhydro ring, generating MurNAc-6-P. Is required for the utilization of anhMurNAc either imported from the medium or derived from its own cell wall murein, and thus plays a role in cell wall recycling. This is Anhydro-N-acetylmuramic acid kinase from Vibrio parahaemolyticus serotype O3:K6 (strain RIMD 2210633).